The primary structure comprises 101 residues: UPF0134 protein MPN_675 (101 aa).

Belongs to the UPF0134 family.

This is UPF0134 protein MPN_675 from Mycoplasma pneumoniae (strain ATCC 29342 / M129 / Subtype 1) (Mycoplasmoides pneumoniae).